A 4466-amino-acid chain; its full sequence is Dynein beta chain, ciliary (4466 aa).

A stem region spans residues 1 to 1813 (MGDVVDARLD…YANICDAQFK (1813 aa)). 154–161 (AGQVKGKT) contacts ATP. 6 coiled-coil regions span residues 482–502 (QEFL…DRRL), 627–643 (QKYE…EQKV), 734–805 (VLEV…WTKQ), 1036–1056 (TLDQ…EADE), 1306–1337 (WLEI…AWDA), and 1443–1468 (LLKS…MTSK). AAA regions lie at residues 1814–2035 (YSYE…VLVV), 2095–2316 (KVVK…IRFK), 2422–2669 (ELDP…VFQG), and 2767–3016 (TYNE…ERRY). Residues 1852 to 1859 (GPAGTGKT), 2133 to 2140 (GNAGTGKS), 2460 to 2467 (GNAGLGKS), and 2805 to 2812 (GVGGSGKQ) each bind ATP. 3 coiled-coil regions span residues 3033-3134 (SLLA…AKAE), 3263-3325 (EPKR…SRTI), and 3573-3642 (QERP…EEAK). The tract at residues 3033–3325 (SLLAMKSKEL…QEAEATSRTI (293 aa)) is stalk. AAA stretches follow at residues 3409–3636 (LTDD…EISV) and 3846–4072 (VRNF…VLYN).

Belongs to the dynein heavy chain family. Consists of at least two heavy chains (alpha and beta), three intermediate chains and several light chains.

Its subcellular location is the cell projection. The protein localises to the cilium. It localises to the flagellum. The protein resides in the cytoplasm. It is found in the cytoskeleton. Its subcellular location is the flagellum axoneme. Force generating protein of eukaryotic cilia and flagella. Produces force towards the minus ends of microtubules. Dynein has ATPase activity; the force-producing power stroke is thought to occur on release of ADP. The protein is Dynein beta chain, ciliary of Heliocidaris crassispina (Sea urchin).